Consider the following 476-residue polypeptide: Exoglucanase-6A (476 aa).

An N-terminal signal peptide occupies residues 1–16 (MAKFFLTAAFAAAALA). 2 disulfide bridges follow: cysteine 33-cysteine 50 and cysteine 44-cysteine 60. One can recognise a CBM1 domain in the interval 33–60 (CGGIGFNGPTCCQSGSTCVKQNDWYSQC). The segment at 67–94 (TTTSTTSTSSSSTTSRATSTTRTGGVTS) is disordered. The O-linked (Man...) threonine glycan is linked to threonine 144. Residue serine 153 is glycosylated (O-linked (Man...) serine). Positions 163 and 165 each coordinate substrate. A glycan (N-linked (GlcNAc...) asparagine) is linked at asparagine 167. The interval 200–222 (YDLPDRDCAAAASNGEWAIANNG) is substrate binding loop 1. Aspartate 252 acts as the Proton donor in catalysis. Substrate-binding residues include histidine 297, tryptophan 300, asparagine 336, tryptophan 397, lysine 425, and glutamate 429. The tract at residues 423–461 (WVKPGGECDGTSDTTAARYDYHCGLEDALKPAPEAGQWF) is substrate binding loop 2. The Proton acceptor role is filled by aspartate 431.

The protein belongs to the glycosyl hydrolase 6 (cellulase A) family. As to quaternary structure, monomer.

The catalysed reaction is Hydrolysis of (1-&gt;4)-beta-D-glucosidic linkages in cellulose and cellotetraose, releasing cellobiose from the non-reducing ends of the chains.. Functionally, plays a central role in the recycling of plant biomass. The biological conversion of cellulose to glucose generally requires three types of hydrolytic enzymes: (1) Endoglucanases which cut internal beta-1,4-glucosidic bonds; (2) Exocellobiohydrolases that cut the disaccharide cellobiose from the non-reducing end of the cellulose polymer chain; (3) Beta-1,4-glucosidases which hydrolyze the cellobiose and other short cello-oligosaccharides to glucose. This Humicola insolens (Soft-rot fungus) protein is Exoglucanase-6A.